Consider the following 459-residue polypeptide: Bifunctional protein GlmU (459 aa).

A pyrophosphorylase region spans residues 1–229 (MSNFAIILAA…FDESLGVNDR (229 aa)). UDP-N-acetyl-alpha-D-glucosamine contacts are provided by residues 8-11 (LAAG), Lys-22, Gln-72, and 77-78 (GT). Asp-102 is a binding site for Mg(2+). 4 residues coordinate UDP-N-acetyl-alpha-D-glucosamine: Gly-139, Glu-154, Asn-169, and Asn-227. Asn-227 serves as a coordination point for Mg(2+). Residues 230-250 (VALATAESVMRRRINHKHMVN) are linker. Positions 251 to 459 (GVSFVNPEAT…TRLPHHPKNQ (209 aa)) are N-acetyltransferase. The UDP-N-acetyl-alpha-D-glucosamine site is built by Arg-332 and Lys-350. Catalysis depends on His-362, which acts as the Proton acceptor. The UDP-N-acetyl-alpha-D-glucosamine site is built by Tyr-365 and Asn-376. Residues Ala-379, 385-386 (NY), Ser-404, Ala-422, and Arg-439 contribute to the acetyl-CoA site.

This sequence in the N-terminal section; belongs to the N-acetylglucosamine-1-phosphate uridyltransferase family. The protein in the C-terminal section; belongs to the transferase hexapeptide repeat family. Homotrimer. Mg(2+) is required as a cofactor.

Its subcellular location is the cytoplasm. It catalyses the reaction alpha-D-glucosamine 1-phosphate + acetyl-CoA = N-acetyl-alpha-D-glucosamine 1-phosphate + CoA + H(+). The enzyme catalyses N-acetyl-alpha-D-glucosamine 1-phosphate + UTP + H(+) = UDP-N-acetyl-alpha-D-glucosamine + diphosphate. It functions in the pathway nucleotide-sugar biosynthesis; UDP-N-acetyl-alpha-D-glucosamine biosynthesis; N-acetyl-alpha-D-glucosamine 1-phosphate from alpha-D-glucosamine 6-phosphate (route II): step 2/2. Its pathway is nucleotide-sugar biosynthesis; UDP-N-acetyl-alpha-D-glucosamine biosynthesis; UDP-N-acetyl-alpha-D-glucosamine from N-acetyl-alpha-D-glucosamine 1-phosphate: step 1/1. It participates in bacterial outer membrane biogenesis; LPS lipid A biosynthesis. Functionally, catalyzes the last two sequential reactions in the de novo biosynthetic pathway for UDP-N-acetylglucosamine (UDP-GlcNAc). The C-terminal domain catalyzes the transfer of acetyl group from acetyl coenzyme A to glucosamine-1-phosphate (GlcN-1-P) to produce N-acetylglucosamine-1-phosphate (GlcNAc-1-P), which is converted into UDP-GlcNAc by the transfer of uridine 5-monophosphate (from uridine 5-triphosphate), a reaction catalyzed by the N-terminal domain. In Streptococcus pneumoniae (strain 70585), this protein is Bifunctional protein GlmU.